The following is a 784-amino-acid chain: Kinesin-like protein 6 (784 aa).

The 384-residue stretch at 6 to 389 (SISVAVRVRP…LKYGNRAKNI (384 aa)) folds into the Kinesin motor domain. 134–141 (GATGCGKT) lines the ATP pocket. 2 coiled-coil regions span residues 405–440 (SEYVRTIYELRQKVSILQKRIAEESKQLALNKEVRK) and 463–483 (RDLQKSLIEHVRTLRRIEDEI). Residues 677-715 (SEVPTTSSVPPVEIKNKDSKPKVEKSLDKHNMNNDRSFL) are disordered. Basic and acidic residues predominate over residues 690-709 (IKNKDSKPKVEKSLDKHNMN).

The protein belongs to the TRAFAC class myosin-kinesin ATPase superfamily. Kinesin family. Kinesin II subfamily. In terms of assembly, heterodimer with klp5.

The protein resides in the cytoplasm. The protein localises to the cytoskeleton. Its subcellular location is the chromosome. It is found in the centromere. It localises to the kinetochore. The protein resides in the spindle. In terms of biological role, has a role in establishing metaphase during mitosis. Required for chromosome segregation where it generates tension during kinetochore capturing. The protein is Kinesin-like protein 6 (klp6) of Schizosaccharomyces pombe (strain 972 / ATCC 24843) (Fission yeast).